The following is a 165-amino-acid chain: MERKKAKIVAELQAVKHNSGKSYNQLAEETGLTNVYVAQLLRRQAQLNPQTAPLLRAALPDLPQDLVPEMMRPPLRSYDPNLIQDPTVYRLNEAVMHFGESIKEIINEEFGDGTMSAIDFYCSVDKIKGVDGKDRVVLTFDGKYLPHSEQKSEHMVSRTRPLGKQ.

Active-site residues include arginine 90, glutamate 93, and serine 116.

The protein belongs to the cyanase family.

The enzyme catalyses cyanate + hydrogencarbonate + 3 H(+) = NH4(+) + 2 CO2. Catalyzes the reaction of cyanate with bicarbonate to produce ammonia and carbon dioxide. This Glycine max (Soybean) protein is Cyanate hydratase.